A 721-amino-acid chain; its full sequence is Exocyst complex component 3-like protein 4 (721 aa).

Disordered regions lie at residues 1-52 and 94-135; these read MPLP…SLGM and GLTA…QAES. Polar residues predominate over residues 22–37; that stretch reads SQTLPVTTWKSNSMKE. Residue Ser-515 is modified to Phosphoserine.

This sequence belongs to the SEC6 family.

The polypeptide is Exocyst complex component 3-like protein 4 (Exoc3l4) (Mus musculus (Mouse)).